The primary structure comprises 84 residues: ATP synthase subunit c (84 aa).

2 helical membrane passes run 9–29 and 54–74; these read IIGA…GFAI and IVAG…LLFI.

This sequence belongs to the ATPase C chain family. In terms of assembly, F-type ATPases have 2 components, F(1) - the catalytic core - and F(0) - the membrane proton channel. F(1) has five subunits: alpha(3), beta(3), gamma(1), delta(1), epsilon(1). F(0) has three main subunits: a(1), b(2) and c(10-14). The alpha and beta chains form an alternating ring which encloses part of the gamma chain. F(1) is attached to F(0) by a central stalk formed by the gamma and epsilon chains, while a peripheral stalk is formed by the delta and b chains.

It is found in the cell inner membrane. Functionally, f(1)F(0) ATP synthase produces ATP from ADP in the presence of a proton or sodium gradient. F-type ATPases consist of two structural domains, F(1) containing the extramembraneous catalytic core and F(0) containing the membrane proton channel, linked together by a central stalk and a peripheral stalk. During catalysis, ATP synthesis in the catalytic domain of F(1) is coupled via a rotary mechanism of the central stalk subunits to proton translocation. Its function is as follows. Key component of the F(0) channel; it plays a direct role in translocation across the membrane. A homomeric c-ring of between 10-14 subunits forms the central stalk rotor element with the F(1) delta and epsilon subunits. This is ATP synthase subunit c from Haemophilus influenzae (strain ATCC 51907 / DSM 11121 / KW20 / Rd).